Here is a 2472-residue protein sequence, read N- to C-terminus: Spectrin alpha chain, non-erythrocytic 1 (2472 aa).

M1 is subject to N-acetylmethionine. 9 Spectrin repeats span residues 45-146 (RFQF…IKLL), 150-251 (KLVQ…QGKL), 256-358 (EVQR…ARLD), 361-465 (YRLQ…QYEQ), 468-570 (DLQL…AQLA), 574-676 (HLQQ…KLRE), 679-781 (QQQQ…QKLA), 785-888 (RLQQ…DLED), and 891-961 (QAQQ…QQVA). S587 carries the phosphoserine modification. At K637 the chain carries N6-acetyllysine. K803 carries the post-translational modification N6-acetyllysine. Phosphoserine occurs at positions 924, 982, 999, 1029, 1031, and 1041. The 60-residue stretch at 967–1026 (TGKELVLALYDYQEKSPREVTMKKGDILTLLNSTNKDWWKVEVNDRQGFVPAAYVKKLDP) folds into the SH3 domain. The Spectrin 10 repeat unit spans residues 1096-1166 (LFREANELQQ…LESEGLMAEE (71 aa)). Y1176 carries the post-translational modification Phosphotyrosine. A phosphoserine mark is found at S1190, S1207, S1217, S1291, S1306, S1323, and S1338. The Spectrin 11 repeat unit spans residues 1233-1336 (HEVQRFHRDA…RADQRKAKLG (104 aa)). Spectrin repeat units follow at residues 1339-1441 (HDLQ…RMML) and 1446-1549 (ELQL…KLGE). K1519 carries the post-translational modification N6-acetyllysine. Phosphoserine is present on residues S1550, S1557, S1578, S1615, and S1647. Spectrin repeat units lie at residues 1552–1656 (TLQQ…KLKE), 1659–1762 (KQQN…KLSE), 1764–1868 (HRLH…RLEE), 1871–1974 (EYQQ…KLDE), 1978–2081 (FLQF…KLLE), 2092–2194 (LFLT…LELQ), and 2206–2310 (LRQE…NLEQ). Phosphothreonine is present on T2020. K2052 carries the N6-acetyllysine modification. Residue T2066 is modified to Phosphothreonine. EF-hand domains follow at residues 2323–2358 (EALKEFSMMFKHFDKDKSGRLNHQEFKSCLRSLGYD), 2366–2401 (EPDPEFEAILDTVDPNRDGHVSLQEYMAFMISRETE), and 2404–2439 (KSSEEIESAFRALSSEGKPYVTKEELYQNLTREQAD). D2336, D2338, S2340, R2342, E2347, D2379, N2381, D2383, H2385, and E2390 together coordinate Ca(2+). At K2421 the chain carries N6-acetyllysine.

Belongs to the spectrin family. Like erythrocyte spectrin, the spectrin-like proteins are capable of forming dimers which can further associate to tetramers. Interacts (via C-terminal spectrin repeats) with TRPC4. Interacts with CALM and EMD. Interacts with isoform 1 of ACP1. Identified in a complex with ACTN4, CASK, IQGAP1, MAGI2, NPHS1 and SPTBN1. Interacts with SHANK3 (via ANK repeats). Interacts with CLN3; this interaction regulates the fodrin localization at the plasma membrane. In terms of processing, phosphorylation of Tyr-1176 decreases sensitivity to cleavage by calpain in vitro.

Its subcellular location is the cytoplasm. It localises to the cytoskeleton. It is found in the cell cortex. Functionally, fodrin, which seems to be involved in secretion, interacts with calmodulin in a calcium-dependent manner and is thus candidate for the calcium-dependent movement of the cytoskeleton at the membrane. This Mus musculus (Mouse) protein is Spectrin alpha chain, non-erythrocytic 1 (Sptan1).